The primary structure comprises 307 residues: Capsid assembly scaffolding protein (307 aa).

Composition is skewed to acidic residues over residues 45 to 54 (IELASDEVET) and 83 to 101 (EPTD…EGSE). The interval 45–105 (IELASDEVET…GTEGSEEFTP (61 aa)) is disordered.

This sequence belongs to the T7likevirus capsid assembly scaffolding protein family.

In terms of biological role, scaffolding protein involved in the icosahedric procapsid assembly. Coassembles with the capsid proteins to form the procapsid, in which the scaffolding protein is found within the external shell of icosahedrally arranged capsid protein subunits. In a subsequent step the scaffolding protein molecules are released from the procapsid. Facilitates assembly by binding to gp10 hexamers but not the pentamers and locking them into a morphogenically correct conformation. The polypeptide is Capsid assembly scaffolding protein (Escherichia coli (Bacteriophage T7)).